The chain runs to 672 residues: uncharacterized protein (672 aa).

Residues 1-24 (MKTLKVLKIFIIVYISSVSLESFA) form the signal peptide. 2 helical membrane passes run 226–246 (IIGA…ALNK) and 254–274 (ITLF…LGPL). The span at 363–372 (SNGTSGNNKP) shows a compositional bias: polar residues. The segment at 363–384 (SNGTSGNNKPIPNFDPDGKKDR) is disordered. The next 4 membrane-spanning stretches (helical) occupy residues 410 to 430 (IILV…LYFI), 436 to 456 (CMVT…MVLF), 469 to 489 (VCIS…LLIT), and 562 to 582 (VVSI…FYYF). Residues 628-646 (HGKSSLGDKPDIGNKRKDG) show a composition bias toward basic and acidic residues. The segment at 628–672 (HGKSSLGDKPDIGNKRKDGAQQGEDAVNSSGGEVADLASGSGGGK) is disordered.

The protein belongs to the TrbL/VirB6 family.

Its subcellular location is the cell membrane. This is an uncharacterized protein from Rickettsia prowazekii (strain Madrid E).